The chain runs to 396 residues: Putative 3-phosphoinositide-dependent protein kinase 2 (396 aa).

The segment covering 1–11 (MVRTQTESSTP) has biased composition (polar residues). A disordered region spans residues 1-53 (MVRTQTESSTPPGIPGGSRQGPAMDGTAAEPRPGAGSLQHAQPPPQPRKKRPE). One can recognise a Protein kinase domain in the interval 55-315 (FKFGKILGEG…YGPLKAHPFF (261 aa)). ATP-binding positions include 65–67 (SFS) and lysine 84. Residues 86–130 (LEKRHIIKENKVPYVTRERDVMSRLDHPFFVKLYFTFQDDEKLYF) are PIF-pocket. Residues 133-135 (SYA) and glutamate 139 each bind ATP. Aspartate 178 functions as the Proton acceptor in the catalytic mechanism. ATP is bound by residues glutamate 182 and aspartate 196.

The protein belongs to the protein kinase superfamily. AGC Ser/Thr protein kinase family. PDPK1 subfamily. Post-translationally, phosphorylated on tyrosine and serine/threonine.

It localises to the cytoplasm. The protein localises to the membrane. The catalysed reaction is L-seryl-[protein] + ATP = O-phospho-L-seryl-[protein] + ADP + H(+). It catalyses the reaction L-threonyl-[protein] + ATP = O-phospho-L-threonyl-[protein] + ADP + H(+). Its function is as follows. Phosphorylates and activates not only PKB/AKT, but also PKA, PKC-zeta, RPS6KA1 and RPS6KB1. May play a general role in signaling processes and in development. The polypeptide is Putative 3-phosphoinositide-dependent protein kinase 2 (Homo sapiens (Human)).